The sequence spans 685 residues: E3 ubiquitin-protein ligase RNF6 (685 aa).

Composition is skewed to basic and acidic residues over residues 1-10 (MNQSRSRSDG), 17-29 (PQDH…ERRW), and 88-107 (DLRD…SSHE). Disordered regions lie at residues 1 to 29 (MNQS…ERRW), 81 to 107 (EQLA…SSHE), 121 to 142 (GNAT…RTNP), 168 to 273 (DYTD…REGQ), 286 to 345 (RSNV…RRRG), and 499 to 576 (EADS…NPNN). Polar residues-rich tracts occupy residues 199 to 213 (SQTS…SNIP), 250 to 264 (ASRT…QSGG), and 286 to 297 (RSNVTVRNTNQR). Residues 303–313 (LRSTSNSRSRS) show a composition bias toward low complexity. 2 stretches are compositionally biased toward polar residues: residues 314 to 325 (PIQRQSGTVYHN) and 519 to 528 (ELSNLGTDNN). The RING-type zinc finger occupies 632 to 673 (CSVCISDYVTGNKLRQLPCMHEFHIHCIDRWLSENCTCPICR).

Belongs to the RNF12 family. Weakly expressed in peripheral blood, spleen, prostate, testis and ovary. According to a report, it is preferentially expressed in testis and ovary and hardly detected in other tissues.

The protein localises to the nucleus. It is found in the cytoplasm. It localises to the cell projection. Its subcellular location is the axon. The protein resides in the PML body. It carries out the reaction S-ubiquitinyl-[E2 ubiquitin-conjugating enzyme]-L-cysteine + [acceptor protein]-L-lysine = [E2 ubiquitin-conjugating enzyme]-L-cysteine + N(6)-ubiquitinyl-[acceptor protein]-L-lysine.. The protein operates within protein modification; protein ubiquitination. E3 ubiquitin-protein ligase mediating 'Lys-48'-linked polyubiquitination of LIMK1 and its subsequent targeting to the proteasome for degradation. Negatively regulates axonal outgrowth through regulation of the LIMK1 turnover. Mediates 'Lys-6' and 'Lys-27'-linked polyubiquitination of AR/androgen receptor thereby modulating its transcriptional activity. May also bind DNA and function as a transcriptional regulator. Mediates polyubiquitination of QKI in macrophages, leading to its degradation. In Homo sapiens (Human), this protein is E3 ubiquitin-protein ligase RNF6.